Here is a 534-residue protein sequence, read N- to C-terminus: Pentatricopeptide repeat-containing protein At5g08305 (534 aa).

PPR repeat units follow at residues 41 to 71 (PFVS…LSDP), 72 to 106 (PNYG…GLLP), 107 to 141 (DHMT…GLEW), 142 to 172 (DLFI…MPHK), 173 to 203 (NLVT…MSER), 204 to 238 (DVVT…GSSK), 240 to 274 (NEVT…HLPL), 275 to 305 (TVIL…ASVK), 308 to 342 (DALM…KIDP), 343 to 377 (DEIT…GAEP), and 378 to 408 (KSEH…MPIK). A type E motif region spans residues 413–488 (MLGALLNGCI…IAGHSILDLD (76 aa)). The interval 489-519 (GTRHRFIAHDKTHFHSDKIYAVLQLTGAWMN) is type E(+) motif.

It belongs to the PPR family. PCMP-E subfamily.

The chain is Pentatricopeptide repeat-containing protein At5g08305 (PCMP-E105) from Arabidopsis thaliana (Mouse-ear cress).